The sequence spans 118 residues: MPRAKTGVVRRRKHKKILKLAKGYWGLRSKSFRKARETLFAAGNYAYAHRKRRKRDFRRLWIVRINAACRQHGLNYSTFIHGLKKAGIEVDRKNLADLAVREPQVFAELVERAKAAQG.

Belongs to the bacterial ribosomal protein bL20 family.

In terms of biological role, binds directly to 23S ribosomal RNA and is necessary for the in vitro assembly process of the 50S ribosomal subunit. It is not involved in the protein synthesizing functions of that subunit. The sequence is that of Large ribosomal subunit protein bL20 from Thermus thermophilus (strain ATCC BAA-163 / DSM 7039 / HB27).